The sequence spans 279 residues: Tumor necrosis factor ligand superfamily member 6 (279 aa).

Topologically, residues 1-78 (MQQPMNYPCP…PLKKKDHNTN (78 aa)) are cytoplasmic. The segment at 30–70 (FPCPSCGPRGPDQRRPPPPPPPVSPLPPPSQPLPLPPLTPL) is disordered. Over residues 45–68 (PPPPPPPVSPLPPPSQPLPLPPLT) the composition is skewed to pro residues. Residues 79–100 (LWLPVVFFMVLVALVGMGLGMY) traverse the membrane as a helical; Signal-anchor for type II membrane protein segment. The Extracellular segment spans residues 101–279 (QLFHLQKELA…SKTFFGLYKL (179 aa)). N-linked (GlcNAc...) asparagine glycosylation occurs at asparagine 117. Over residues 126–135 (EKQIANPSTP) the composition is skewed to polar residues. Residues 126-150 (EKQIANPSTPSEKKEPRSVAHLTGN) form a disordered region. Residues 143 to 279 (SVAHLTGNPH…SKTFFGLYKL (137 aa)) form the THD domain. N-linked (GlcNAc...) asparagine glycosylation occurs at asparagine 182. The cysteines at positions 200 and 231 are disulfide-linked. N-linked (GlcNAc...) asparagine glycosylation is found at asparagine 248 and asparagine 258.

The protein belongs to the tumor necrosis factor family. In terms of assembly, homotrimer. Interacts with ARHGAP9, BAIAP2L1, BTK, CACNB3, CACNB4, CRK, DLG2, DNMBP, DOCK4, EPS8L3, FGR, FYB1, FYN, HCK, ITK, ITSN2, KALRN, LYN, MACC1, MIA, MPP4, MYO15A, NCF1, NCK1, NCK2, NCKIPSD, OSTF1, PIK3R1, PSTPIP1, RIMBP3C, SAMSN1, SH3GL3, SH3PXD2B, SH3PXD2A, SH3RF2, SKAP2, SNX33, SNX9, SORBS3, SPTA1, SRC, SRGAP1, SRGAP2, SRGAP3, TEC, TJP3 and YES1. In terms of processing, the soluble form derives from the membrane form by proteolytic processing. The membrane-bound form undergoes two successive intramembrane proteolytic cleavages. The first one is processed by ADAM10 producing an N-terminal fragment, which lacks the receptor-binding extracellular domain. This ADAM10-processed FasL (FAsL APL) remnant form is still membrane anchored and further processed by SPPL2A that liberates the FasL intracellular domain (FasL ICD). FasL shedding by ADAM10 is a prerequisite for subsequent intramembrane cleavage by SPPL2A in T-cells. Phosphorylated by FGR on tyrosine residues; this is required for ubiquitination and subsequent internalization. Post-translationally, N-glycosylated. Glycosylation enhances apoptotic activity. In terms of processing, monoubiquitinated. In terms of tissue distribution, expressed in T-cells. Expressed in natural killer cells.

Its subcellular location is the cell membrane. The protein localises to the cytoplasmic vesicle lumen. It localises to the lysosome lumen. The protein resides in the secreted. It is found in the nucleus. Functionally, cytokine that binds to TNFRSF6/FAS, a receptor that transduces the apoptotic signal into cells. Involved in cytotoxic T-cell-mediated apoptosis, natural killer cell-mediated apoptosis and in T-cell development. Initiates fratricidal/suicidal activation-induced cell death (AICD) in antigen-activated T-cells contributing to the termination of immune responses. TNFRSF6/FAS-mediated apoptosis also has a role in the induction of peripheral tolerance. Binds to TNFRSF6B/DcR3, a decoy receptor that blocks apoptosis. Its function is as follows. Induces FAS-mediated activation of NF-kappa-B, initiating non-apoptotic signaling pathways. Can induce apoptosis but does not appear to be essential for this process. In terms of biological role, cytoplasmic form induces gene transcription inhibition. The protein is Tumor necrosis factor ligand superfamily member 6 (Faslg) of Mus musculus (Mouse).